The following is a 296-amino-acid chain: uncharacterized protein (296 aa).

The N-terminal stretch at 1 to 20 is a signal peptide; sequence MKKALGILAILLILVGGYFA.

This is an uncharacterized protein from Aquifex aeolicus (strain VF5).